The primary structure comprises 59 residues: Conotoxin mr5a (59 aa).

Residues 1–22 form the signal peptide; it reads MRCLPVFVILLLLIASAPSVDA. A propeptide spanning residues 23–48 is cleaved from the precursor; the sequence is RPKTKDDMPLASFHDNAKRILQILQD.

Contains 2 disulfide bonds that can be either 'C1-C3, C2-C4' or 'C1-C4, C2-C3', since these disulfide connectivities have been observed for conotoxins with cysteine framework V (for examples, see AC P0DQQ7 and AC P81755). Expressed by the venom duct.

Its subcellular location is the secreted. This is Conotoxin mr5a from Conus marmoreus (Marble cone).